Here is a 159-residue protein sequence, read N- to C-terminus: Ribonuclease H (159 aa).

The RNase H type-1 domain occupies 1–145 (MTHIRAIYTD…CDLIARRLSR (145 aa)). Mg(2+) contacts are provided by Asp-10, Glu-49, Asp-74, and Asp-137.

This sequence belongs to the RNase H family. In terms of assembly, monomer. Requires Mg(2+) as cofactor.

It is found in the cytoplasm. It catalyses the reaction Endonucleolytic cleavage to 5'-phosphomonoester.. Endonuclease that specifically degrades the RNA of RNA-DNA hybrids. The polypeptide is Ribonuclease H (Thermosynechococcus vestitus (strain NIES-2133 / IAM M-273 / BP-1)).